We begin with the raw amino-acid sequence, 954 residues long: Leucine--tRNA ligase (954 aa).

The 'HIGH' region motif lies at 40–51 (PYPSGAGLHVGH). The 'KMSKS' region motif lies at 729–733 (KMSKS). Lysine 732 lines the ATP pocket.

It belongs to the class-I aminoacyl-tRNA synthetase family.

Its subcellular location is the cytoplasm. The enzyme catalyses tRNA(Leu) + L-leucine + ATP = L-leucyl-tRNA(Leu) + AMP + diphosphate. The sequence is that of Leucine--tRNA ligase from Flavobacterium johnsoniae (strain ATCC 17061 / DSM 2064 / JCM 8514 / BCRC 14874 / CCUG 350202 / NBRC 14942 / NCIMB 11054 / UW101) (Cytophaga johnsonae).